A 791-amino-acid polypeptide reads, in one-letter code: Ataxin-1 (791 aa).

The span at 1-30 (MKSNQERSNECLPPKKREIPATSRPSEEKA) shows a compositional bias: basic and acidic residues. Residues 1-36 (MKSNQERSNECLPPKKREIPATSRPSEEKATALPSD) are disordered. A Glycyl lysine isopeptide (Lys-Gly) (interchain with G-Cter in SUMO) cross-link involves residue Lys-16. Residues Ser-81 and Ser-87 each carry the phosphoserine modification. Disordered regions lie at residues 187-240 (SQAP…TSPP) and 298-402 (EVLN…HRSY). Lys-193 is covalently cross-linked (Glycyl lysine isopeptide (Lys-Gly) (interchain with G-Cter in SUMO)). Ser-213 carries the post-translational modification Phosphoserine. Thr-218 bears the Phosphothreonine mark. Polar residues-rich tracts occupy residues 219–236 (QQNQ…SGRA), 312–327 (ASSS…SSKS), and 362–388 (PNSS…TLND). Ser-229 carries the phosphoserine modification. Residues 470–580 (VGSPDMDTPG…TEDFIQSAEI (111 aa)) are self-association. Residues 514–791 (LVTQAAYPAM…CIEGRSNVGK (278 aa)) are interaction with USP7. The tract at residues 516 to 742 (TQAAYPAMVQ…FLSKIEPSKP (227 aa)) is RNA-binding. The AXH domain occupies 538–669 (SPTTASPTLP…SLTLKNLKNG (132 aa)). Residues Lys-585, Lys-672, and Lys-721 each participate in a glycyl lysine isopeptide (Lys-Gly) (interchain with G-Cter in SUMO) cross-link. The disordered stretch occupies residues 736–774 (KIEPSKPTATRKRRWSAPETRKLEKSEDEPPLTLPKPSL). Ser-751 carries the post-translational modification Phosphoserine. Positions 770-773 (PKPS) match the Nuclear localization signal motif.

Belongs to the ATXN1 family. Homooligomer. Interacts with PQBP1, UBQLN4 and USP7. Interacts with ANP32A. Interacts with CIC. Directly interacts with RBPJ; this interaction is disrupted in the presence of Notch intracellular domain. Interacts with ATXN1L; competes with ATXN1L for RBPJ-binding. Found in a complex with CIC and ATXN1L. In terms of processing, ubiquitinated by UBE3A, leading to its degradation by the proteasome. The presence of poly-Gln repeats in trangenic models developed to replicate phenotypes of the spinocerebellar ataxia 1 disease (SCA1) impair ubiquitination and degradation, leading to accumulation of Atxn1 in neurons and subsequent toxicity. Post-translationally, sumoylation is dependent on nuclear localization and phosphorylation at Ser-751. In terms of tissue distribution, expressed in the cortex and hypothalamus (at protein level). Widely expressed. In brain, the pattern of distribution is limited to neuron populations.

Its subcellular location is the cytoplasm. The protein localises to the nucleus. Its function is as follows. Chromatin-binding factor that repress Notch signaling in the absence of Notch intracellular domain by acting as a CBF1 corepressor. Binds to the HEY promoter and might assist, along with NCOR2, RBPJ-mediated repression. May be involved in RNA metabolism. In concert with CIC and ATXN1L, involved in brain development. The protein is Ataxin-1 (Atxn1) of Mus musculus (Mouse).